We begin with the raw amino-acid sequence, 124 residues long: Small ribosomal subunit protein uS12 (124 aa).

Residues 1-32 (MPTIQQLVRKGRQAKASKTKTPALKGSPQRRG) are disordered. Residues 9–18 (RKGRQAKASK) are compositionally biased toward basic residues. 3-methylthioaspartic acid is present on Asp-89.

Belongs to the universal ribosomal protein uS12 family. In terms of assembly, part of the 30S ribosomal subunit. Contacts proteins S8 and S17. May interact with IF1 in the 30S initiation complex.

Its function is as follows. With S4 and S5 plays an important role in translational accuracy. Functionally, interacts with and stabilizes bases of the 16S rRNA that are involved in tRNA selection in the A site and with the mRNA backbone. Located at the interface of the 30S and 50S subunits, it traverses the body of the 30S subunit contacting proteins on the other side and probably holding the rRNA structure together. The combined cluster of proteins S8, S12 and S17 appears to hold together the shoulder and platform of the 30S subunit. The sequence is that of Small ribosomal subunit protein uS12 from Acidothermus cellulolyticus (strain ATCC 43068 / DSM 8971 / 11B).